A 513-amino-acid chain; its full sequence is Zinc finger CCCH-type with G patch domain-containing protein (513 aa).

The C3H1-type zinc-finger motif lies at 155-178 (PCSYYLEGECRFDEAKCRFSHGAL). Composition is skewed to acidic residues over residues 252–261 (DQDEDDELSS) and 273–283 (SDEAESDMDDL). The tract at residues 252–283 (DQDEDDELSSEESTSSMRDASSDEAESDMDDL) is disordered. The G-patch domain maps to 312-358 (TRGIGSKLMEKMGYIHGTGLGSDGRGIVTPVSAQILPQGRSLDACME). Residues 477–495 (QVQMQSHKQELATLQAQER) show a composition bias toward polar residues. A disordered region spans residues 477–513 (QVQMQSHKQELATLQAQERSLSKEQQTRKSKNKMFEF). A compositionally biased stretch (basic and acidic residues) spans 496–513 (SLSKEQQTRKSKNKMFEF).

The protein resides in the nucleus. Transcription repressor. The protein is Zinc finger CCCH-type with G patch domain-containing protein of Drosophila simulans (Fruit fly).